Reading from the N-terminus, the 137-residue chain is MLQPKRTKYRKPHRVSYEGKAKGAKEINFGEFGLMALDGAWIDNHQIEAARIAMTRYMKRDGKIWMRIFPHMAMTKKPAEVRMGSGKGNPEKWVAVVKKGTIMFEVAQVNEQVAREALRLAMHKLPIRCKFVKRGEN.

The protein belongs to the universal ribosomal protein uL16 family. In terms of assembly, part of the 50S ribosomal subunit.

Binds 23S rRNA and is also seen to make contacts with the A and possibly P site tRNAs. The chain is Large ribosomal subunit protein uL16 from Mycoplasma capricolum subsp. capricolum (strain California kid / ATCC 27343 / NCTC 10154).